The following is a 158-amino-acid chain: MIRFLGNIEAKADAKGRVFIPAQFRRQLQSGSEDKLIMRKDVFQDCLVLYPEEVWNEELDELRQRLNKWNANHQLIFRQFVSDVEIITMDGNGRILIPKRYLQITGIQSDVRFIGVDNKIEIWAKERAEKLFMEPKAFGAALEEIMKEERRTTNNELK.

SpoVT-AbrB domains lie at 7 to 54 and 84 to 127; these read NIEA…PEEV and VEII…AKER.

This sequence belongs to the MraZ family. In terms of assembly, forms oligomers.

The protein resides in the cytoplasm. Its subcellular location is the nucleoid. This Bacteroides fragilis (strain ATCC 25285 / DSM 2151 / CCUG 4856 / JCM 11019 / LMG 10263 / NCTC 9343 / Onslow / VPI 2553 / EN-2) protein is Transcriptional regulator MraZ.